A 158-amino-acid chain; its full sequence is Urease accessory protein UreE (158 aa).

This sequence belongs to the UreE family.

Its subcellular location is the cytoplasm. In terms of biological role, involved in urease metallocenter assembly. Binds nickel. Probably functions as a nickel donor during metallocenter assembly. This Corynebacterium urealyticum (strain ATCC 43042 / DSM 7109) protein is Urease accessory protein UreE.